The following is a 409-amino-acid chain: L-cysteine:1D-myo-inositol 2-amino-2-deoxy-alpha-D-glucopyranoside ligase (409 aa).

The tract at residues 1-27 is disordered; that stretch reads MHAWPASEVPALPGQGRDLRIHDTATG. Cysteine 43 contributes to the Zn(2+) binding site. L-cysteinyl-5'-AMP is bound by residues 43-46, threonine 58, and 81-83; these read CGIT and NVT. The short motif at 45–55 is the 'HIGH' region element; sequence ITPYDATHMGH. The short motif at 183–188 is the 'ERGGDP' region element; that stretch reads ERGGDP. Tryptophan 224 serves as a coordination point for L-cysteinyl-5'-AMP. Cysteine 228 provides a ligand contact to Zn(2+). 246-248 serves as a coordination point for L-cysteinyl-5'-AMP; the sequence is GSD. Residue histidine 253 participates in Zn(2+) binding. Valine 280 is a binding site for L-cysteinyl-5'-AMP. Positions 286-290 match the 'KMSKS' region motif; sequence KMSKS.

This sequence belongs to the class-I aminoacyl-tRNA synthetase family. MshC subfamily. In terms of assembly, monomer. Zn(2+) is required as a cofactor.

The enzyme catalyses 1D-myo-inositol 2-amino-2-deoxy-alpha-D-glucopyranoside + L-cysteine + ATP = 1D-myo-inositol 2-(L-cysteinylamino)-2-deoxy-alpha-D-glucopyranoside + AMP + diphosphate + H(+). Its function is as follows. Catalyzes the ATP-dependent condensation of GlcN-Ins and L-cysteine to form L-Cys-GlcN-Ins. The polypeptide is L-cysteine:1D-myo-inositol 2-amino-2-deoxy-alpha-D-glucopyranoside ligase (mshC) (Streptomyces coelicolor (strain ATCC BAA-471 / A3(2) / M145)).